A 447-amino-acid chain; its full sequence is Na(+)-translocating NADH-quinone reductase subunit A (447 aa).

This sequence belongs to the NqrA family. As to quaternary structure, composed of six subunits; NqrA, NqrB, NqrC, NqrD, NqrE and NqrF.

The catalysed reaction is a ubiquinone + n Na(+)(in) + NADH + H(+) = a ubiquinol + n Na(+)(out) + NAD(+). Functionally, NQR complex catalyzes the reduction of ubiquinone-1 to ubiquinol by two successive reactions, coupled with the transport of Na(+) ions from the cytoplasm to the periplasm. NqrA to NqrE are probably involved in the second step, the conversion of ubisemiquinone to ubiquinol. The polypeptide is Na(+)-translocating NADH-quinone reductase subunit A (Haemophilus influenzae (strain 86-028NP)).